A 343-amino-acid polypeptide reads, in one-letter code: Retroviral-like aspartic protease 1 (343 aa).

The Cytoplasmic portion of the chain corresponds to M1–P55. The propeptide occupies M1 to N190. Residues F56–A76 traverse the membrane as a helical segment. Topologically, residues E77–H343 are extracellular. Positions V207–V288 constitute a Peptidase A2 domain. The active site involves D212. Residue N276 is glycosylated (N-linked (GlcNAc...) asparagine). Residues L327–H343 constitute a propeptide that is removed on maturation.

Homodimer. In terms of processing, undergoes autocleavage which is necessary for activation of the protein. As to expression, expressed primarily in the granular layer of the epidermis and inner root sheath of hair follicles. In psoriatic skin, expressed throughout the stratum corneum. In ulcerated skin, expressed in the stratum granulosum of intact epidermis but almost absent from ulcerated regions. Expressed in differentiated areas of squamous cell carcinomas but not in undifferentiated tumors.

The protein resides in the membrane. Protease responsible for filaggrin processing, essential for the maintenance of a proper epidermis organization. This Homo sapiens (Human) protein is Retroviral-like aspartic protease 1.